A 172-amino-acid chain; its full sequence is Crossover junction endodeoxyribonuclease RuvC (172 aa).

Active-site residues include aspartate 8, glutamate 67, and aspartate 139. 3 residues coordinate Mg(2+): aspartate 8, glutamate 67, and aspartate 139.

It belongs to the RuvC family. Homodimer which binds Holliday junction (HJ) DNA. The HJ becomes 2-fold symmetrical on binding to RuvC with unstacked arms; it has a different conformation from HJ DNA in complex with RuvA. In the full resolvosome a probable DNA-RuvA(4)-RuvB(12)-RuvC(2) complex forms which resolves the HJ. The cofactor is Mg(2+).

It localises to the cytoplasm. It catalyses the reaction Endonucleolytic cleavage at a junction such as a reciprocal single-stranded crossover between two homologous DNA duplexes (Holliday junction).. Functionally, the RuvA-RuvB-RuvC complex processes Holliday junction (HJ) DNA during genetic recombination and DNA repair. Endonuclease that resolves HJ intermediates. Cleaves cruciform DNA by making single-stranded nicks across the HJ at symmetrical positions within the homologous arms, yielding a 5'-phosphate and a 3'-hydroxyl group; requires a central core of homology in the junction. The consensus cleavage sequence is 5'-(A/T)TT(C/G)-3'. Cleavage occurs on the 3'-side of the TT dinucleotide at the point of strand exchange. HJ branch migration catalyzed by RuvA-RuvB allows RuvC to scan DNA until it finds its consensus sequence, where it cleaves and resolves the cruciform DNA. This chain is Crossover junction endodeoxyribonuclease RuvC, found in Hahella chejuensis (strain KCTC 2396).